The sequence spans 409 residues: Transcriptional regulator GME11370 (409 aa).

A DNA-binding region (zn(2)-C6 fungal-type) is located at residues cysteine 17–cysteine 44. The tract at residues threonine 49–aspartate 83 is disordered. Positions arginine 51 to lysine 62 are enriched in basic residues.

It is found in the nucleus. Functionally, transcriptional regulator; part of the gene cluster that mediates the biosynthesis of dibenzodioxocinones such as pestalotiollide B, a novel class of inhibitors against cholesterol ester transfer protein (CEPT). The chain is Transcriptional regulator GME11370 from Pestalotiopsis microspora.